The chain runs to 366 residues: Galactoside alpha-(1,2)-fucosyltransferase 1 (366 aa).

The Cytoplasmic portion of the chain corresponds to 1–8 (MWPRSHRH). The helical; Signal-anchor for type II membrane protein transmembrane segment at 9–25 (LCLAFLLVCVLSAISFL) threads the bilayer. Residues 26-366 (IHFHQDSIRH…LSPLWPLAEP (341 aa)) lie on the Lumenal side of the membrane. N-linked (GlcNAc...) asparagine glycosylation is found at asparagine 66, asparagine 302, and asparagine 328.

The protein belongs to the glycosyltransferase 11 family.

It is found in the golgi apparatus. Its subcellular location is the golgi stack membrane. It carries out the reaction a beta-D-galactosyl-(1-&gt;4)-N-acetyl-beta-D-glucosaminyl derivative + GDP-beta-L-fucose = an alpha-L-Fuc-(1-&gt;2)-beta-D-Gal-(1-&gt;4)-beta-D-GlcNAc derivative + GDP + H(+). It catalyses the reaction a ganglioside GA1 + GDP-beta-L-fucose = a ganglioside Fuc-GA1 + GDP + H(+). The enzyme catalyses a beta-D-Gal-(1-&gt;3)-beta-D-GlcNAc-(1-&gt;3)-beta-D-Gal-(1-&gt;4)-beta-D-Glc-(1&lt;-&gt;1')-Cer(d18:1(4E)) + GDP-beta-L-fucose = alpha-L-fucosyl-(1-&gt;2)- beta-D-galactosyl-(1-&gt;3)-N-acetyl-beta-D-glucosaminyl-(1-&gt;3)-beta-D-galactosyl-(1-&gt;4)-beta-D-glucosyl-(1&lt;-&gt;1')-N-acylsphing-4-enine + GDP + H(+). The catalysed reaction is a neolactoside nLc4Cer(d18:1(4E)) + GDP-beta-L-fucose = a neolactoside IV(2)-alpha-Fuc-nLc4Cer(d18:1(4E)) + GDP + H(+). It carries out the reaction a ganglioside GM1 + GDP-beta-L-fucose = a ganglioside Fuc-GM1 + GDP + H(+). It catalyses the reaction beta-D-galactosyl-(1-&gt;3)-N-acetyl-D-galactosamine + GDP-beta-L-fucose = alpha-L-fucosyl-(1-&gt;2)-beta-D-galactosyl-(1-&gt;3)-N-acetyl-D-galactosamine + GDP + H(+). It functions in the pathway protein modification; protein glycosylation. Its function is as follows. Catalyzes the transfer of L-fucose, from a guanosine diphosphate-beta-L-fucose, to the terminal galactose residue of glycoconjugates through an alpha(1,2) linkage leading to H antigen synthesis that is an intermediate substrate in the synthesis of ABO blood group antigens. H antigen is essential for maturation of the glomerular layer of the main olfactory bulb, in cell migration and early cell-cell contacts during tumor associated angiogenesis. Preferentially fucosylates soluble lactose and to a lesser extent fucosylates glycolipids gangliosides GA1 and GM1a. The sequence is that of Galactoside alpha-(1,2)-fucosyltransferase 1 from Saimiri sciureus (Common squirrel monkey).